The following is a 270-amino-acid chain: Formamidopyrimidine-DNA glycosylase (270 aa).

Catalysis depends on P2, which acts as the Schiff-base intermediate with DNA. The active-site Proton donor is E3. K58 serves as the catalytic Proton donor; for beta-elimination activity. Positions 91, 110, and 151 each coordinate DNA. An FPG-type zinc finger spans residues L236–R270. R260 serves as the catalytic Proton donor; for delta-elimination activity.

It belongs to the FPG family. Monomer. The cofactor is Zn(2+).

It catalyses the reaction Hydrolysis of DNA containing ring-opened 7-methylguanine residues, releasing 2,6-diamino-4-hydroxy-5-(N-methyl)formamidopyrimidine.. The enzyme catalyses 2'-deoxyribonucleotide-(2'-deoxyribose 5'-phosphate)-2'-deoxyribonucleotide-DNA = a 3'-end 2'-deoxyribonucleotide-(2,3-dehydro-2,3-deoxyribose 5'-phosphate)-DNA + a 5'-end 5'-phospho-2'-deoxyribonucleoside-DNA + H(+). Functionally, involved in base excision repair of DNA damaged by oxidation or by mutagenic agents. Acts as a DNA glycosylase that recognizes and removes damaged bases. Has a preference for oxidized purines, such as 7,8-dihydro-8-oxoguanine (8-oxoG). Has AP (apurinic/apyrimidinic) lyase activity and introduces nicks in the DNA strand. Cleaves the DNA backbone by beta-delta elimination to generate a single-strand break at the site of the removed base with both 3'- and 5'-phosphates. This chain is Formamidopyrimidine-DNA glycosylase, found in Stenotrophomonas maltophilia (strain R551-3).